The chain runs to 179 residues: ATP synthase subunit delta (179 aa).

The protein belongs to the ATPase delta chain family. F-type ATPases have 2 components, F(1) - the catalytic core - and F(0) - the membrane proton channel. F(1) has five subunits: alpha(3), beta(3), gamma(1), delta(1), epsilon(1). F(0) has three main subunits: a(1), b(2) and c(10-14). The alpha and beta chains form an alternating ring which encloses part of the gamma chain. F(1) is attached to F(0) by a central stalk formed by the gamma and epsilon chains, while a peripheral stalk is formed by the delta and b chains.

The protein localises to the cell inner membrane. In terms of biological role, f(1)F(0) ATP synthase produces ATP from ADP in the presence of a proton or sodium gradient. F-type ATPases consist of two structural domains, F(1) containing the extramembraneous catalytic core and F(0) containing the membrane proton channel, linked together by a central stalk and a peripheral stalk. During catalysis, ATP synthesis in the catalytic domain of F(1) is coupled via a rotary mechanism of the central stalk subunits to proton translocation. Functionally, this protein is part of the stalk that links CF(0) to CF(1). It either transmits conformational changes from CF(0) to CF(1) or is implicated in proton conduction. The protein is ATP synthase subunit delta of Koribacter versatilis (strain Ellin345).